Reading from the N-terminus, the 633-residue chain is Guanylate-binding protein 6 (633 aa).

A GTPase domain (Globular) region spans residues 1 to 310 (MESGPKMLAP…EAINSGAVPC (310 aa)). The 243-residue stretch at 35–277 (SQPVVVVAIV…FCSYIFTHAR (243 aa)) folds into the GB1/RHD3-type G domain. GTP contacts are provided by residues 45 to 52 (GLYRTGKS), 67 to 69 (LGS), and 97 to 101 (DTEGL).

Belongs to the TRAFAC class dynamin-like GTPase superfamily. GB1/RHD3 GTPase family. GB1 subfamily. (Microbial infection) Ubiquitinated by S.flexneri IpaH9.8, leading to its degradation by the proteasome, thereby preventing its ability to promote host defense against bacterial infection.

The protein resides in the cytoplasmic vesicle. The enzyme catalyses GTP + H2O = GDP + phosphate + H(+). In terms of biological role, interferon (IFN)-inducible GTPase that plays important roles in innate immunity against a diverse range of bacterial, viral and protozoan pathogens, such as bacterial pathogens Listeria monocytogenes and Mycobacterium bovis BCG as well as the protozoan pathogen Toxoplasma gondii. Confers protection to several pathogens, including the bacterial pathogens Listeria monocytogenes and Mycobacterium bovis BCG as well as the protozoan pathogen Toxoplasma gondii. The polypeptide is Guanylate-binding protein 6 (GBP6) (Homo sapiens (Human)).